The following is a 36-amino-acid chain: Protein P4 (36 aa).

Residues 13 to 33 (GLQLSLLICACLLAVLIVSFC) form a helical membrane-spanning segment.

Its subcellular location is the host membrane. This chain is Protein P4, found in Vitis vinifera (Grape).